The following is a 147-amino-acid chain: Male-specific protein scotti (147 aa).

The interval 55 to 93 (PQEPPLGVFPAQGGPNGPPRRRKKRSFYTMTKPTPPCQS) is disordered. The segment covering 82 to 93 (YTMTKPTPPCQS) has biased composition (polar residues). A glycan (N-linked (GlcNAc...) asparagine) is linked at Asn-128.

This sequence belongs to the male-specific scotti family. Expressed in primary spermatocytes and round spermatids. Low expression is seen in very short elongating cysts, but were detected at high levels in a few longer spermatid cysts.

Functionally, post-meiotically transcribed gene that has a role in late spermiogenesis; required for actin cone progression during spermatid individualization. The sequence is that of Male-specific protein scotti from Drosophila melanogaster (Fruit fly).